The following is a 163-amino-acid chain: Retinoic acid receptor responder protein 2 (163 aa).

The signal sequence occupies residues 1-20 (MRRLLIPLALWLGAVGVGVA). Intrachain disulfides connect cysteine 77-cysteine 87, cysteine 98-cysteine 117, and cysteine 101-cysteine 135. A propeptide spanning residues 158-163 (KALPRS) is cleaved from the precursor.

Secreted in an inactive precursor form, prochemerin, which is proteolytically processed by a variety of extracellular proteases to generate forms with differing levels of bioactivity. For example, the removal of six amino acids results in chemerin-157, which exhibits the highest activity, while removal of seven amino acids results in chemerin-156 which has slightly less activity. Some proteases are able to cleave at more than one site and chemerin forms may be sequentially processed by different enzymes to modulate activity levels. The coordinated expression and activity of chemerin-modifying enzymes is essential for regulating its bioactivation, inactivation and, consequently, biological function. Cathepsin G cleaves seven C-terminal amino acids from prochemerin (chemerin-156), elastase is able to cleave six (chemerin-157), eight (chemerin-155) or eleven (chemerin-152), plasmin cleaves five amino acids (chemerin-158), and tryptase cleaves five (chemerin-158) or eight (chemerin-155). Multiple cleavages might be required to fully activate chemerin, with an initial tryptase cleavage resulting in chemerin with low activity (chemerin-158), and a second cleavage by carboxypeptidase N or B producing highly active chemerin (chemerin-157). In terms of tissue distribution, expressed at the highest levels in placenta, liver, and white adipose tissue (WAT), and to a lesser extent in many other tissues such as lung, brown adipose tissue, heart, ovary, kidney, skeletal muscle and pancreas. Within WAT, expression is enriched in adipocytes as compared to the stromal vascular fraction. Expression and secretion increases dramatically with adipogenesis. Highly expressed in skin (basal and suprabasal layers of the epidermis, hair follicles and endothelial cells). Expression is elevated in numerous metabolic and inflammatory diseases including psoriasis, obesity, type 2 diabetes, metabolic syndrome and cardiovascular disease.

It localises to the secreted. In terms of biological role, adipocyte-secreted protein (adipokine) that regulates adipogenesis, metabolism and inflammation through activation of the chemokine-like receptor 1 (CMKLR1). Also acts as a ligand for CMKLR2. Can also bind to C-C chemokine receptor-like 2 (CCRL2), but with a lower affinity than it does to CMKLR1 or CMKLR2. Positively regulates adipocyte differentiation, modulates the expression of adipocyte genes involved in lipid and glucose metabolism and might play a role in angiogenesis, a process essential for the expansion of white adipose tissue. Also acts as a pro-inflammatory adipokine, causing an increase in secretion of pro-inflammatory and prodiabetic adipokines, which further impair adipose tissue metabolic function and have negative systemic effects including impaired insulin sensitivity, altered glucose and lipid metabolism, and a decrease in vascular function in other tissues. Can have both pro- and anti-inflammatory properties depending on the modality of enzymatic cleavage by different classes of proteases. Acts as a chemotactic factor for leukocyte populations expressing CMKLR1, particularly immature plasmacytoid dendritic cells, but also immature myeloid DCs, macrophages and natural killer cells. Exerts an anti-inflammatory role by preventing TNF/TNFA-induced VCAM1 expression and monocytes adhesion in vascular endothelial cells. The effect is mediated via inhibiting activation of NF-kappa-B and CRK/p38 through stimulation of AKT1/NOS3 signaling and nitric oxide production. Its dual role in inflammation and metabolism might provide a link between chronic inflammation and obesity, as well as obesity-related disorders such as type 2 diabetes and cardiovascular disease. Exhibits an antimicrobial function in the skin. In Homo sapiens (Human), this protein is Retinoic acid receptor responder protein 2 (RARRES2).